We begin with the raw amino-acid sequence, 28 residues long: Cliotide T21 (28 aa).

Residues 1 to 28 (DLQCAETCVHSPCIGPCYCKHGLICYRN) constitute a cross-link (cyclopeptide (Asp-Asn)). Intrachain disulfides connect Cys-4–Cys-17, Cys-8–Cys-19, and Cys-13–Cys-25.

Post-translationally, contains 3 disulfide bonds. In terms of processing, this is a cyclic peptide. In terms of tissue distribution, expressed in root nodules but not in seed.

Its function is as follows. Probably participates in a plant defense mechanism. Not active against Gram-negative bacterium E.coli ATCC 700926 or Gram-positive bacterium S.aureus ATCC 12600 up to a concentration of 100 uM under low-salt conditions. The polypeptide is Cliotide T21 (Clitoria ternatea (Butterfly pea)).